Here is a 317-residue protein sequence, read N- to C-terminus: Glucokinase (317 aa).

6 to 12 provides a ligand contact to ATP; that stretch reads GVDIGGT.

Belongs to the ROK (NagC/XylR) family. Homooligomer (possibly a homotetramer). Alternatively, it may form a heterotetramer of two glucokinase subunits with two ORF2 (AC P40182) proteins.

It is found in the cytoplasm. The catalysed reaction is D-glucose + ATP = D-glucose 6-phosphate + ADP + H(+). In terms of biological role, a probable glucose kinase. Required for glucose repression of many different genes, restores glucose kinase activity in E.coli glk mutants. The sequence is that of Glucokinase (glkA) from Streptomyces coelicolor (strain ATCC BAA-471 / A3(2) / M145).